The sequence spans 87 residues: Large ribosomal subunit protein bL27 (87 aa).

The segment at 1-24 (MAHKKGTGSTRNGRDSRSQRLGVK) is disordered.

This sequence belongs to the bacterial ribosomal protein bL27 family.

The polypeptide is Large ribosomal subunit protein bL27 (Crocosphaera subtropica (strain ATCC 51142 / BH68) (Cyanothece sp. (strain ATCC 51142))).